The chain runs to 315 residues: MAVVTIRQLLDCGVHFGHPKTRWNPKMKRFIFTERSGIYIIDLQQSLALIDKAYDFVKETVAHGGTILFVGTKKQAQESIAEQAQRVGQPYVNQRWLGGLLTNFQTVHKRLNRLKELDLVDFDDTTRGFTKKELLIQRRERDKLEKSLGGIRNLTKTPSAMWVVDTKKEHLAIDEARKLGIPVIGILDTNCDPDEVQYPIPGNDDAIRSVALLTRIIADAAAEGLIQRHQKPDAEGSAPAEPLADWERELLEQGDAAKAELPVEENDVDAEVSAKNEAKSEDEVAAPVHAPESDDATEAKIEAEATESEKAPVSE.

The disordered stretch occupies residues 250-315 (LLEQGDAAKA…TESEKAPVSE (66 aa)). 2 stretches are compositionally biased toward basic and acidic residues: residues 272–282 (VSAKNEAKSED) and 297–315 (TEAKIEAEATESEKAPVSE).

The protein belongs to the universal ribosomal protein uS2 family.

The polypeptide is Small ribosomal subunit protein uS2 (Clavibacter michiganensis subsp. michiganensis (strain NCPPB 382)).